The following is a 440-amino-acid chain: Enolase 1-2 (440 aa).

Substrate contacts are provided by H160 and E169. E212 acts as the Proton donor in catalysis. 3 residues coordinate Mg(2+): D247, E296, and D321. E296 and D321 together coordinate substrate. K346 functions as the Proton acceptor in the catalytic mechanism. Substrate-binding positions include 373–376 (SHRS) and K397.

The protein belongs to the enolase family. As to quaternary structure, homodimer. It depends on Mg(2+) as a cofactor.

The protein resides in the cytoplasm. The enzyme catalyses (2R)-2-phosphoglycerate = phosphoenolpyruvate + H2O. It functions in the pathway carbohydrate degradation; glycolysis; pyruvate from D-glyceraldehyde 3-phosphate: step 4/5. The chain is Enolase 1-2 (eno102) from Schizosaccharomyces pombe (strain 972 / ATCC 24843) (Fission yeast).